We begin with the raw amino-acid sequence, 512 residues long: MTVYNINLGIGWASSGVEYAQSYRAQAFRNLNISAKFVFSDLILGNNIADLTANLGFNADQIIWLYNFFTDIKIAPSTFLLDTFVEQNHLEQRNFSLLPNNGTKELQYKSEEEKLTIVPRYNNREKQTIDQVTYIFNNRLIKRDFYSYTKYATEYYSGEEKDNQVIFREFYNENGTIAYTQHLDGDGHELFEFPDQNYYSKTDLYREMLRKFNFKADDIIILDRMDEDKQLVNGQLIFEHHLPAKLVIPVHADHYDKHYTNDHQVLWNNFYEYQFMHYQDVAAYVVATDRQRDLLASQQKHFNHAKPQINTIPVGSLEHLVKPKGTRKKHSLITASRLANEKHIDWVIEATVAAHKIVSDLTLDIYGEGGERSRLQNLITKNNADSYIKLMGQHDLKDVYQKYETYIAGSTSEGFGLSLMEAVGSGLSMIGFDVPYGNQTFIVDQQNGYLLPYTEDWSNSRKEQLLADAIVKNFTEADLTSFHEKSYSLAESYLTKNVAKQWQQLIGELQHA.

16 to 19 (GVEY) contacts UDP. His251 is an N-acetyl-D-glucosamine binding site. Residues 393–394 (QH) and 413–416 (EGFG) each bind UDP.

Belongs to the glycosyltransferase group 1 family. Glycosyltransferase 4 subfamily. Forms a heterotetramer with 2 subunits each of GtfA and GtfB. Part of the accessory SecA2/SecY2 protein translocation apparatus.

The protein resides in the cytoplasm. Its subcellular location is the cell membrane. It catalyses the reaction L-seryl-[protein] + UDP-N-acetyl-alpha-D-glucosamine = 3-O-[N-acetyl-alpha-D-glucosaminyl]-L-seryl-[protein] + UDP + H(+). The protein operates within protein modification; protein glycosylation. Required for polymorphic O-glycosylation of the serine-rich repeat protein (SRRP) in this bacteria. Catalyzes the first step in glycosylation by transferring N-acetylglucosamine from UDP-GlcNAc to serine residues in the substrate protein. Part of the accessory SecA2/SecY2 system specifically required to export serine-rich repeat cell wall proteins encoded in the same operon. The GtfA-GtfB complex adds GlcNAc from UDP-GlcNAc to SRRP (experimentally characterized with a truncated SSR1 construct); the alpha linkage was shown for this enzyme but not the residues glycosylated on SRRP. This is UDP-N-acetylglucosamine--peptide N-acetylglucosaminyltransferase GtfA subunit from Limosilactobacillus reuteri subsp. suis (strain ATCC 53608 / LMG 31752 / 1063) (Lactobacillus reuteri).